Reading from the N-terminus, the 160-residue chain is uncharacterized protein (160 aa).

An N-terminal signal peptide occupies residues 1-29; sequence MCGLGIVPMVKPALFGMLILVIGTSTVQA.

This is an uncharacterized protein from Sinorhizobium fredii (strain NBRC 101917 / NGR234).